Here is a 226-residue protein sequence, read N- to C-terminus: Ribonuclease 3 (226 aa).

In terms of domain architecture, RNase III spans 4–127 (LEEFEKKLGY…VMGAIYLEKG (124 aa)). Glu-40 contacts Mg(2+). The active site involves Asp-44. Residues Asn-113 and Glu-116 each coordinate Mg(2+). The active site involves Glu-116. A DRBM domain is found at 154–223 (DFKTALQEFT…AKEALKILKA (70 aa)).

The protein belongs to the ribonuclease III family. Homodimer. The cofactor is Mg(2+).

The protein localises to the cytoplasm. It catalyses the reaction Endonucleolytic cleavage to 5'-phosphomonoester.. Functionally, digests double-stranded RNA. Involved in the processing of primary rRNA transcript to yield the immediate precursors to the large and small rRNAs (23S and 16S). Processes some mRNAs, and tRNAs when they are encoded in the rRNA operon. Processes pre-crRNA and tracrRNA of type II CRISPR loci if present in the organism. The chain is Ribonuclease 3 from Nitratiruptor sp. (strain SB155-2).